A 372-amino-acid chain; its full sequence is Chaperone protein DnaJ (372 aa).

Residues 5–70 (DYYELLEISR…EKKSIYDRYG (66 aa)) enclose the J domain. Residues 134 to 211 (GCNKEINYKY…CKGTGYEEVK (78 aa)) form a CR-type zinc finger. 8 residues coordinate Zn(2+): cysteine 147, cysteine 150, cysteine 163, cysteine 166, cysteine 185, cysteine 188, cysteine 199, and cysteine 202. CXXCXGXG motif repeat units follow at residues 147-154 (CKPCEGTG), 163-170 (CPTCKGQG), 185-192 (CPRCGGTG), and 199-206 (CKSCKGTG).

The protein belongs to the DnaJ family. As to quaternary structure, homodimer. Zn(2+) serves as cofactor.

The protein localises to the cytoplasm. Functionally, participates actively in the response to hyperosmotic and heat shock by preventing the aggregation of stress-denatured proteins and by disaggregating proteins, also in an autonomous, DnaK-independent fashion. Unfolded proteins bind initially to DnaJ; upon interaction with the DnaJ-bound protein, DnaK hydrolyzes its bound ATP, resulting in the formation of a stable complex. GrpE releases ADP from DnaK; ATP binding to DnaK triggers the release of the substrate protein, thus completing the reaction cycle. Several rounds of ATP-dependent interactions between DnaJ, DnaK and GrpE are required for fully efficient folding. Also involved, together with DnaK and GrpE, in the DNA replication of plasmids through activation of initiation proteins. The protein is Chaperone protein DnaJ of Aliarcobacter butzleri (strain RM4018) (Arcobacter butzleri).